Here is a 273-residue protein sequence, read N- to C-terminus: MSEYTKQITRLISEVRSKKPLIHNITNYVTVNDCANVTLAIGASPIMADDIDEAADITSISSALVINIGTLNKRTIESMILSGKKANEKGIPVIFDPVGAGASALRNETTSTILDKIKISVLRGNLSEISYIAGRNASTKGVDASEADIQSNDSIAVAKAAAVKLGCVVAVTGAVDVISDGKNVVTVLNGHKMLSNVTGTGCMTTALVGSFCGAVKDYFKAAVAGVTVMGISGEIAYEAAGHKGTGSYHIAIIDAISRMDENIFGEKARINEI.

Methionine 47 is a binding site for substrate. ATP is bound by residues arginine 123 and threonine 172. Position 199 (glycine 199) interacts with substrate.

This sequence belongs to the Thz kinase family. It depends on Mg(2+) as a cofactor.

The catalysed reaction is 5-(2-hydroxyethyl)-4-methylthiazole + ATP = 4-methyl-5-(2-phosphooxyethyl)-thiazole + ADP + H(+). It participates in cofactor biosynthesis; thiamine diphosphate biosynthesis; 4-methyl-5-(2-phosphoethyl)-thiazole from 5-(2-hydroxyethyl)-4-methylthiazole: step 1/1. In terms of biological role, catalyzes the phosphorylation of the hydroxyl group of 4-methyl-5-beta-hydroxyethylthiazole (THZ). The polypeptide is Hydroxyethylthiazole kinase (Ruminiclostridium cellulolyticum (strain ATCC 35319 / DSM 5812 / JCM 6584 / H10) (Clostridium cellulolyticum)).